The following is a 381-amino-acid chain: Cell division protein FtsZ (381 aa).

The segment at 1–25 is disordered; sequence MKFINDAIKESEKREKPSSSSMNSE. A compositionally biased stretch (basic and acidic residues) spans 7 to 17; the sequence is AIKESEKREKP. Residues 48-52, 135-137, E166, R170, and D213 each bind GTP; these read GAGNN and GTG.

This sequence belongs to the FtsZ family. As to quaternary structure, homodimer. Polymerizes to form a dynamic ring structure in a strictly GTP-dependent manner. Interacts directly with several other division proteins.

It is found in the cytoplasm. In terms of biological role, essential cell division protein that forms a contractile ring structure (Z ring) at the future cell division site. The regulation of the ring assembly controls the timing and the location of cell division. One of the functions of the FtsZ ring is to recruit other cell division proteins to the septum to produce a new cell wall between the dividing cells. Binds GTP and shows GTPase activity. In Methanothermobacter thermautotrophicus (strain ATCC 29096 / DSM 1053 / JCM 10044 / NBRC 100330 / Delta H) (Methanobacterium thermoautotrophicum), this protein is Cell division protein FtsZ.